A 314-amino-acid polypeptide reads, in one-letter code: Oxaloacetate tautomerase FAHD2A, mitochondrial (314 aa).

The N-terminal 84 residues, 1–84, are a transit peptide targeting the mitochondrion; that stretch reads MLGSSGRRLL…ATLSVVRRAL (84 aa). Glutamate 159, glutamate 161, and aspartate 190 together coordinate Mg(2+).

This sequence belongs to the FAH family. Mg(2+) serves as cofactor. Requires Mn(2+) as cofactor.

It is found in the mitochondrion. It catalyses the reaction oxaloacetate = enol-oxaloacetate. Tautomerase that converts enol-oxaloacetate, a strong inhibitor of succinate dehydrogenase, to the physiological keto form of oxaloacetate. It is thereby required to maximize aerobic respiration efficiency by preventing succinate dehydrogenase inhibition. This Bos taurus (Bovine) protein is Oxaloacetate tautomerase FAHD2A, mitochondrial.